The chain runs to 316 residues: MAYTNNLQIIYGDATLGITGKNFHYLFSYERGGLESLNINNKEWLYRVPTPTFWRATTDNDRGNGFNLKASQWLGADMFTKCTKIELKVDDRQFDELPIAPINNQFSNHEYADHVQIAFWYQTLTNPATDVKIIYNIDNTGCINIVMHYFGKKGLPPLPVIGMRFIMPTAATGFDYEGLSGETYPDRMAGAKEGKFHVDGLPVTKYLVPQENGMHMQTKALKITRSSTLNNADQESEFSLKLKQDKQPFNFSCLPYTAEELENATHLEELPLARRTVLVIAGAVRGVGGIDSWGADVEKQYHINPEKDYEFSFNLN.

The protein belongs to the bacterial beta-galactosidase small subunit family. As to quaternary structure, heterodimer of a large (LacL) and a small subunit (LacM).

It catalyses the reaction Hydrolysis of terminal non-reducing beta-D-galactose residues in beta-D-galactosides.. Its function is as follows. Component of a beta-galactosidase. This chain is Beta-galactosidase small subunit (lacM), found in Lactobacillus acidophilus (strain ATCC 700396 / NCK56 / N2 / NCFM).